Reading from the N-terminus, the 335-residue chain is Nuclear envelope-associated protein 2 (335 aa).

2 coiled-coil regions span residues 55–85 (RKEA…ELVA) and 125–260 (CSVL…LKKK). Positions 239 to 260 (KTKELESQLERQRRADQELKKK) match the Bipartite nuclear localization signal motif. Residues 312–329 (FWDTSGFKIVVSMSMLIL) form a helical membrane-spanning segment.

As to quaternary structure, forms homomers and heteromers with NEAP1 and NEAP3. Interacts with SUN1 and SUN2.

The protein resides in the nucleus inner membrane. The protein localises to the nucleus. It is found in the nucleoplasm. The sequence is that of Nuclear envelope-associated protein 2 from Arabidopsis thaliana (Mouse-ear cress).